Consider the following 124-residue polypeptide: Orexigenic neuropeptide QRFP (124 aa).

The signal sequence occupies residues 1–17 (MRCLCSWLCLLLPLSAC). A propeptide spanning residues 18 to 79 (FPLLDRRGPT…REHTGFRLGR (62 aa)) is cleaved from the precursor. A disordered region spans residues 63-100 (KEQQASRREHTGFRLGRQDSGSEATGFLPTDSEKASGP). Pyrrolidone carboxylic acid is present on Gln-80. Residue Phe-122 is modified to Phenylalanine amide.

It belongs to the RFamide neuropeptide family. As to quaternary structure, ligand for the G-protein coupled receptor QRFPR/GPR103. As to expression, expressed in the brain with highest expression levels in the hypothalamus and optic nerve. Also expressed in the trachea and mammary gland.

It localises to the secreted. Stimulates feeding and grooming behavior, metabolic rate and locomotor activity and increases blood pressure. May have orexigenic activity. May promote aldosterone secretion by the adrenal gland. In Rattus norvegicus (Rat), this protein is Orexigenic neuropeptide QRFP (Qrfp).